The sequence spans 169 residues: Methanogen homoaconitase small subunit (169 aa).

The YLRT motif lies at 27–30 (YLRT).

It belongs to the LeuD family. LeuD type 2 subfamily. As to quaternary structure, heterotetramer of 2 HacA and 2 HacB proteins.

It catalyses the reaction (2R)-homocitrate = (2R,3S)-homoisocitrate. It carries out the reaction (2R)-homocitrate = cis-homoaconitate + H2O. The catalysed reaction is (2R,3S)-homoisocitrate = cis-homoaconitate + H2O. The enzyme catalyses cis-(homo)2aconitate + H2O = (2R,3S)-iso(homo)2citrate. It catalyses the reaction cis-(homo)3aconitate + H2O = (2R,3S)-iso(homo)3citrate. The protein operates within organic acid metabolism; 2-oxosuberate biosynthesis. In terms of biological role, component of a hydro-lyase with broad substrate specificity for cis-unsaturated tricarboxylic acids. Catalyzes both the reversible dehydration of (R)-homocitrate ((R)-2-hydroxybutane-1,2,4-tricarboxylate) to produce cis-homoaconitate ((Z)-but-1-ene-1,2,4-tricarboxylate), and its hydration to homoisocitrate ((1R,2S)-1-hydroxybutane-1,2,4-tricarboxylate). Is also able to hydrate the analogous longer chain substrates cis-homo(2)-aconitate, cis-homo(3)-aconitate. These reactions are part of the biosynthesis pathway of coenzyme B. The sequence is that of Methanogen homoaconitase small subunit (hacB) from Methanosarcina mazei (strain ATCC BAA-159 / DSM 3647 / Goe1 / Go1 / JCM 11833 / OCM 88) (Methanosarcina frisia).